Here is a 283-residue protein sequence, read N- to C-terminus: Phosphatidylglycerol--prolipoprotein diacylglyceryl transferase (283 aa).

3 consecutive transmembrane segments (helical) span residues 14-34 (LGPL…ALFL), 56-76 (MLMY…VLFY), and 88-108 (IFMV…VLIA). An a 1,2-diacyl-sn-glycero-3-phospho-(1'-sn-glycerol)-binding site is contributed by Arg-139. The helical transmembrane segment at 258–278 (MGQWLSLPMIVIGVALLVFFG) threads the bilayer.

It belongs to the Lgt family.

Its subcellular location is the cell inner membrane. It catalyses the reaction L-cysteinyl-[prolipoprotein] + a 1,2-diacyl-sn-glycero-3-phospho-(1'-sn-glycerol) = an S-1,2-diacyl-sn-glyceryl-L-cysteinyl-[prolipoprotein] + sn-glycerol 1-phosphate + H(+). It functions in the pathway protein modification; lipoprotein biosynthesis (diacylglyceryl transfer). Catalyzes the transfer of the diacylglyceryl group from phosphatidylglycerol to the sulfhydryl group of the N-terminal cysteine of a prolipoprotein, the first step in the formation of mature lipoproteins. The chain is Phosphatidylglycerol--prolipoprotein diacylglyceryl transferase from Chromobacterium violaceum (strain ATCC 12472 / DSM 30191 / JCM 1249 / CCUG 213 / NBRC 12614 / NCIMB 9131 / NCTC 9757 / MK).